A 590-amino-acid chain; its full sequence is Tape measure protein (590 aa).

3 disordered regions span residues 1–35 (MKKP…LSGL), 147–185 (ESVG…EEKQ), and 515–535 (LKKN…EAKQ). Residues 176–185 (PKQESPEEKQ) are compositionally biased toward basic and acidic residues.

It localises to the virion. Serves as a base for tail tube protein polymerization and acts as a template for tail length determination. The polypeptide is Tape measure protein (29) (Escherichia coli (Bacteriophage T4)).